Consider the following 508-residue polypeptide: GMP synthase [glutamine-hydrolyzing] (508 aa).

In terms of domain architecture, Glutamine amidotransferase type-1 spans 1–189 (MIVVLDFGSQ…ALLVCGCEKT (189 aa)). The Nucleophile role is filled by C78. Residues H163 and E165 contribute to the active site. The GMPS ATP-PPase domain occupies 190 to 383 (WGMQNFAQKE…LGVSQDFLMR (194 aa)). Residue 217–223 (SGGVDST) participates in ATP binding.

In terms of assembly, homodimer.

It carries out the reaction XMP + L-glutamine + ATP + H2O = GMP + L-glutamate + AMP + diphosphate + 2 H(+). Its pathway is purine metabolism; GMP biosynthesis; GMP from XMP (L-Gln route): step 1/1. Functionally, catalyzes the synthesis of GMP from XMP. In Helicobacter acinonychis (strain Sheeba), this protein is GMP synthase [glutamine-hydrolyzing].